A 304-amino-acid chain; its full sequence is Aquaglyceroporin-3 (304 aa).

The Cytoplasmic segment spans residues Met-1–Gly-68. A helical transmembrane segment spans residues Glu-69–Ile-89. Topologically, residues Asp-90–Phe-95 are extracellular. A helical membrane pass occupies residues Leu-96 to Ile-116. Residues Ser-117 to Gly-142 lie on the Cytoplasmic side of the membrane. Residues Tyr-143 to Ala-163 traverse the membrane as a helical segment. The Extracellular segment spans residues Asp-164–Leu-196. The chain crosses the membrane as a helical span at residues Phe-197–Ile-217. The Cytoplasmic segment spans residues Phe-218–Leu-231. A helical transmembrane segment spans residues Ala-232–Ile-252. Residues Asn-253 to Asn-277 are Extracellular-facing. A helical membrane pass occupies residues Tyr-278–Tyr-298. Topologically, residues Lys-299–His-304 are cytoplasmic.

It belongs to the MIP/aquaporin (TC 1.A.8) family.

The protein localises to the cell membrane. It carries out the reaction glycerol(in) = glycerol(out). The enzyme catalyses H2O(in) = H2O(out). The catalysed reaction is urea(in) = urea(out). Mediates water and glycerol transport across the cell membrane. Permeable to urea. Permeable to methylamine/methylammonium. Permeable to dihydroxyacetone. Permeable to erythritol and ribitol. The polypeptide is Aquaglyceroporin-3 (Trypanosoma brucei brucei).